Here is a 431-residue protein sequence, read N- to C-terminus: Foot protein 1 variant 2 (431 aa).

The N-terminal stretch at 1–20 (MARNMNILTLFAVLLGSASA) is a signal peptide. Tyrosine 22 bears the 3',4'-dihydroxyphenylalanine mark. A 4-hydroxyproline modification is found at proline 33. The A-1; approximate repeat unit spans residues 41–50 (VPPPAWTAWK). The 13 X 10 AA A-P-P-P-A-W-T-A-W-K stretch occupies residues 41-270 (VPPPAWTAWK…APPPAWTAWK (230 aa)). Residues tryptophan 46, tryptophan 49, tryptophan 56, and tryptophan 59 each carry the 7'-hydroxytryptophan modification. C-linked (Man) hydroxytryptophan glycosylation is found at tryptophan 46, tryptophan 49, tryptophan 56, and tryptophan 59. The stretch at 51–60 (AHPPAWTAWK) is one A-2; approximate repeat. Residues 61–70 (ATPKPWTAWK) form a B-1 repeat. A 27 X 10 AA A-T-P-K-P-W-T-A-W-K region spans residues 61 to 310 (ATPKPWTAWK…ATPKPWTAWR (250 aa)). Residue proline 65 is modified to 4-hydroxyproline. C-linked (Man) tryptophan glycosylation occurs at tryptophan 66. Residue tryptophan 69 is modified to 7'-hydroxytryptophan. C-linked (Man) hydroxytryptophan glycosylation occurs at tryptophan 69. The stretch at 71 to 80 (APPPAWTAWK) is one A-3 repeat. 3 positions are modified to 4-hydroxyproline: proline 72, proline 73, and proline 74. Residues tryptophan 76 and tryptophan 79 each carry the 7'-hydroxytryptophan modification. C-linked (Man) hydroxytryptophan glycosylation is found at tryptophan 76 and tryptophan 79. Residues 81-90 (ATPKPWTAWK) form a B-2 repeat. A 4-hydroxyproline modification is found at proline 85. The C-linked (Man) tryptophan glycan is linked to tryptophan 86. 7'-hydroxytryptophan is present on tryptophan 89. The C-linked (Man) hydroxytryptophan glycan is linked to tryptophan 89. An A-4; approximate repeat occupies 91–100 (APPPTWTAWK). 3 positions are modified to 4-hydroxyproline: proline 92, proline 93, and proline 94. Residues tryptophan 96 and tryptophan 99 each carry the 7'-hydroxytryptophan modification. Residues tryptophan 96 and tryptophan 99 are each glycosylated (C-linked (Man) hydroxytryptophan). Residues 101-110 (ATPKPWTAWK) form a B-3 repeat. Proline 105 bears the 4-hydroxyproline mark. C-linked (Man) tryptophan glycosylation is present at tryptophan 106. Tryptophan 109 is subject to 7'-hydroxytryptophan. Tryptophan 109 carries C-linked (Man) hydroxytryptophan glycosylation. Residues 111 to 120 (APPPVWTAWK) form an A-5; approximate repeat. A 4-hydroxyproline mark is found at proline 112, proline 113, and proline 114. Residues tryptophan 116 and tryptophan 119 each carry the 7'-hydroxytryptophan modification. C-linked (Man) hydroxytryptophan glycosylation is found at tryptophan 116 and tryptophan 119. A B-4; approximate repeat occupies 121–130 (ATPKPRTAWK). Proline 125 carries the 4-hydroxyproline modification. Tryptophan 129 is modified (7'-hydroxytryptophan). Tryptophan 129 is a glycosylation site (C-linked (Man) hydroxytryptophan). An A-6; approximate repeat occupies 131-140 (APPPTWTAWK). A 4-hydroxyproline mark is found at proline 132, proline 133, and proline 134. 2 positions are modified to 7'-hydroxytryptophan: tryptophan 136 and tryptophan 139. Residues tryptophan 136 and tryptophan 139 are each glycosylated (C-linked (Man) hydroxytryptophan). A B-5; approximate repeat occupies 141–150 (AAPKPWTAWK). Proline 145 is modified (4-hydroxyproline). Tryptophan 146 carries C-linked (Man) tryptophan glycosylation. Tryptophan 149 carries the post-translational modification 7'-hydroxytryptophan. Tryptophan 149 is a glycosylation site (C-linked (Man) hydroxytryptophan). The B-6 repeat unit spans residues 151-160 (ATPKPWTAWK). Proline 155 is subject to 4-hydroxyproline. Tryptophan 156 carries C-linked (Man) tryptophan glycosylation. Tryptophan 159 is subject to 7'-hydroxytryptophan. Tryptophan 159 carries a C-linked (Man) hydroxytryptophan glycan. One copy of the A-7 repeat lies at 161-170 (APPPAWTAWK). Proline 162, proline 163, and proline 164 each carry 4-hydroxyproline. 7'-hydroxytryptophan is present on residues tryptophan 166 and tryptophan 169. 2 C-linked (Man) hydroxytryptophan glycosylation sites follow: tryptophan 166 and tryptophan 169. The B-7 repeat unit spans residues 171-180 (ATPKPWTAWK). The residue at position 175 (proline 175) is a 4-hydroxyproline. A C-linked (Man) tryptophan glycan is attached at tryptophan 176. Residue tryptophan 179 is modified to 7'-hydroxytryptophan. C-linked (Man) hydroxytryptophan glycosylation occurs at tryptophan 179. The B-8 repeat unit spans residues 181–190 (ATPKPWTAWK). Proline 185 is subject to 4-hydroxyproline. Tryptophan 186 is a glycosylation site (C-linked (Man) tryptophan). Tryptophan 189 carries the 7'-hydroxytryptophan modification. C-linked (Man) hydroxytryptophan glycosylation is present at tryptophan 189. The B-9 repeat unit spans residues 191–200 (ATPKPWTAWK). Residue proline 195 is modified to 4-hydroxyproline. Tryptophan 196 is a glycosylation site (C-linked (Man) tryptophan). Tryptophan 199 is subject to 7'-hydroxytryptophan. Tryptophan 199 is a glycosylation site (C-linked (Man) hydroxytryptophan). The stretch at 201–210 (ATPKPWTVWK) is one B-10; approximate repeat. 4-hydroxyproline is present on proline 205. A C-linked (Man) tryptophan glycan is attached at tryptophan 206. 7'-hydroxytryptophan is present on tryptophan 209. The C-linked (Man) hydroxytryptophan glycan is linked to tryptophan 209. The stretch at 211-220 (ATPKPWTAWK) is one B-11 repeat. A 4-hydroxyproline modification is found at proline 215. C-linked (Man) tryptophan glycosylation occurs at tryptophan 216. Tryptophan 219 is subject to 7'-hydroxytryptophan. The C-linked (Man) hydroxytryptophan glycan is linked to tryptophan 219. The stretch at 221–230 (APPPAWTAWK) is one A-8 repeat. 4-hydroxyproline occurs at positions 222, 223, and 224. 7'-hydroxytryptophan occurs at positions 226 and 229. Residues tryptophan 226 and tryptophan 229 are each glycosylated (C-linked (Man) hydroxytryptophan). A B-12 repeat occupies 231-240 (ATPKPWTAWK). Proline 235 carries the 4-hydroxyproline modification. C-linked (Man) tryptophan glycosylation occurs at tryptophan 236. A 7'-hydroxytryptophan modification is found at tryptophan 239. C-linked (Man) hydroxytryptophan glycosylation occurs at tryptophan 239. An A-9 repeat occupies 241-250 (APPPAWTAWK). 4-hydroxyproline occurs at positions 242, 243, and 244. A 7'-hydroxytryptophan mark is found at tryptophan 246 and tryptophan 249. Residues tryptophan 246 and tryptophan 249 are each glycosylated (C-linked (Man) hydroxytryptophan). A B-13 repeat occupies 251–260 (ATPKPWTAWK). A 4-hydroxyproline modification is found at proline 255. Tryptophan 256 is a glycosylation site (C-linked (Man) tryptophan). A 7'-hydroxytryptophan modification is found at tryptophan 259. C-linked (Man) hydroxytryptophan glycosylation occurs at tryptophan 259. One copy of the A-10 repeat lies at 261–270 (APPPAWTAWK). A 4-hydroxyproline mark is found at proline 262, proline 263, and proline 264. 7'-hydroxytryptophan occurs at positions 266 and 269. 2 C-linked (Man) hydroxytryptophan glycosylation sites follow: tryptophan 266 and tryptophan 269. The B-14 repeat unit spans residues 271-280 (ATPKPWTAWK). 4-hydroxyproline is present on proline 275. C-linked (Man) tryptophan glycosylation is present at tryptophan 276. Tryptophan 279 carries the post-translational modification 7'-hydroxytryptophan. C-linked (Man) hydroxytryptophan glycosylation is present at tryptophan 279. One copy of the B-15 repeat lies at 281–290 (ATPKPWTAWK). A 4-hydroxyproline modification is found at proline 285. Residue tryptophan 286 is glycosylated (C-linked (Man) tryptophan). Tryptophan 289 is modified (7'-hydroxytryptophan). A C-linked (Man) hydroxytryptophan glycan is attached at tryptophan 289. The B-16 repeat unit spans residues 291–300 (ATPKPWTAWK). Proline 295 is modified (4-hydroxyproline). Tryptophan 296 carries a C-linked (Man) tryptophan glycan. Tryptophan 299 carries the post-translational modification 7'-hydroxytryptophan. A C-linked (Man) hydroxytryptophan glycan is attached at tryptophan 299. A B-17; approximate repeat occupies 301–310 (ATPKPWTAWR). Proline 305 carries the 4-hydroxyproline modification. Tryptophan 306 is a glycosylation site (C-linked (Man) tryptophan). Tryptophan 309 is modified (7'-hydroxytryptophan). C-linked (Man) hydroxytryptophan glycosylation is present at tryptophan 309. Positions 322 to 377 (GHGYGGYGKPGKPGKPGSKGPRGPAGPPGATGKTGRTGATGKRGPPGYPGKPGVPG) are disordered. A compositionally biased stretch (gly residues) spans 323-332 (HGYGGYGKPG). A Collagen-like domain is found at 329–380 (GKPGKPGKPGSKGPRGPAGPPGATGKTGRTGATGKRGPPGYPGKPGVPGRNG). Residues 336-366 (KPGSKGPRGPAGPPGATGKTGRTGATGKRGP) are compositionally biased toward low complexity. 4-hydroxyproline is present on residues proline 367, proline 370, and proline 376.

Produced by the byssal gland.

The protein resides in the secreted. Its function is as follows. Provides adhesiveness to the mussel's foot. Mussels produce one of the strongest water insoluble glues. The mussel's adhesive is a bundle of threads, called a byssus, formed by a fibrous collagenous core coated with adhesive proteins. The chain is Foot protein 1 variant 2 from Perna viridis (Asian green mussel).